The chain runs to 399 residues: Forkhead box protein Q1 (399 aa).

Positions 1-112 are disordered; it reads MKLEVFAPRA…EGARSKPYTR (112 aa). Residues 32–54 show a composition bias toward low complexity; it reads LSAAGDDSLGSDGDCAANSPAAG. A compositionally biased stretch (gly residues) spans 55-66; the sequence is SGAGDLEGGGGE. A DNA-binding region (fork-head) is located at residues 114–205; it reads PKPPYSYIAL…SEYTFADGVF (92 aa). The tract at residues 211-263 is disordered; it reads RLSHRTTVSASGYGGGSPPGPAGTPQPAPTAGSSPIARSPARQEEGSSPASKF. Over residues 228–238 the composition is skewed to pro residues; sequence PPGPAGTPQPA.

It is found in the nucleus. Its function is as follows. Plays a role in hair follicle differentiation. The chain is Forkhead box protein Q1 (Foxq1) from Rattus norvegicus (Rat).